We begin with the raw amino-acid sequence, 210 residues long: Thymidylate kinase (210 aa).

Position 10 to 17 (10 to 17) interacts with ATP; it reads GPEGAGKS.

Belongs to the thymidylate kinase family.

The catalysed reaction is dTMP + ATP = dTDP + ADP. Its function is as follows. Phosphorylation of dTMP to form dTDP in both de novo and salvage pathways of dTTP synthesis. This chain is Thymidylate kinase, found in Ectopseudomonas mendocina (strain ymp) (Pseudomonas mendocina).